A 124-amino-acid polypeptide reads, in one-letter code: MSANQDITLTEGEGSRPAGDKGKGKAVGSEDIPMEQYSGDSETEESDAADDETFPEDDIEEEEEAGDDNLERISEENIIPGGRRTRGKVINFAEAAEKVEADDAMDDDDDEEYKQRDEDDEMQG.

The interval 1–124 is disordered; the sequence is MSANQDITLT…QRDEDDEMQG (124 aa). 2 stretches are compositionally biased toward acidic residues: residues 41-68 and 102-124; these read SETE…AGDD and DDAM…EMQG.

Belongs to the CHZ1 family. As to quaternary structure, forms a heterotrimer with H2A.Z-H2B, stabilizing the association of the histone dimer. Also, with a lower affinity, forms a heterotrimer with H2A-H2B.

The protein resides in the nucleus. Functionally, forms a chaperone-bound H2A.Z-H2B complex that acts as a source for SWR1 complex-dependent H2A to H2A.Z histone replacement in chromatin. The protein is Histone H2A.Z-specific chaperone CHZ1 (CHZ1) of Coccidioides immitis (strain RS) (Valley fever fungus).